We begin with the raw amino-acid sequence, 96 residues long: Co-chaperonin GroES (96 aa).

This sequence belongs to the GroES chaperonin family. As to quaternary structure, heptamer of 7 subunits arranged in a ring. Interacts with the chaperonin GroEL.

It is found in the cytoplasm. In terms of biological role, together with the chaperonin GroEL, plays an essential role in assisting protein folding. The GroEL-GroES system forms a nano-cage that allows encapsulation of the non-native substrate proteins and provides a physical environment optimized to promote and accelerate protein folding. GroES binds to the apical surface of the GroEL ring, thereby capping the opening of the GroEL channel. This Shewanella frigidimarina (strain NCIMB 400) protein is Co-chaperonin GroES.